The chain runs to 58 residues: Small ribosomal subunit protein bS21 (58 aa).

The interval 27–58 (GVLSEARKHEHYEKPSVKRKKKSEAARKRKFK) is disordered. Basic and acidic residues predominate over residues 31–42 (EARKHEHYEKPS). The segment covering 43-58 (VKRKKKSEAARKRKFK) has biased composition (basic residues).

The protein belongs to the bacterial ribosomal protein bS21 family.

The chain is Small ribosomal subunit protein bS21 from Desulfitobacterium hafniense (strain DSM 10664 / DCB-2).